The following is a 98-amino-acid chain: Large ribosomal subunit protein uL23 (98 aa).

It belongs to the universal ribosomal protein uL23 family. In terms of assembly, part of the 50S ribosomal subunit. Contacts protein L29, and trigger factor when it is bound to the ribosome.

One of the early assembly proteins it binds 23S rRNA. One of the proteins that surrounds the polypeptide exit tunnel on the outside of the ribosome. Forms the main docking site for trigger factor binding to the ribosome. This is Large ribosomal subunit protein uL23 from Roseobacter denitrificans (strain ATCC 33942 / OCh 114) (Erythrobacter sp. (strain OCh 114)).